The following is a 274-amino-acid chain: SPbeta prophage-derived uncharacterized protein YomD (274 aa).

This chain is SPbeta prophage-derived uncharacterized protein YomD (yomD), found in Bacillus subtilis (strain 168).